A 338-amino-acid polypeptide reads, in one-letter code: Phenylalanine--tRNA ligase alpha subunit (338 aa).

Glu-252 serves as a coordination point for Mg(2+).

It belongs to the class-II aminoacyl-tRNA synthetase family. Phe-tRNA synthetase alpha subunit type 1 subfamily. In terms of assembly, tetramer of two alpha and two beta subunits. Mg(2+) serves as cofactor.

Its subcellular location is the cytoplasm. It catalyses the reaction tRNA(Phe) + L-phenylalanine + ATP = L-phenylalanyl-tRNA(Phe) + AMP + diphosphate + H(+). The protein is Phenylalanine--tRNA ligase alpha subunit of Pseudomonas paraeruginosa (strain DSM 24068 / PA7) (Pseudomonas aeruginosa (strain PA7)).